The following is a 433-amino-acid chain: GTPase Der (433 aa).

EngA-type G domains lie at 3 to 167 (KIVS…DKNI) and 175 to 349 (PRIA…FNLR). Residues 9 to 16 (GRPNVGKS), 56 to 60 (DTGGY), 119 to 122 (NKID), 181 to 188 (GRPNVGKS), 228 to 232 (DTAGI), and 293 to 296 (NKWD) contribute to the GTP site. In terms of domain architecture, KH-like spans 350–433 (LRIKTSLLNK…IPIKILFRLK (84 aa)).

The protein belongs to the TRAFAC class TrmE-Era-EngA-EngB-Septin-like GTPase superfamily. EngA (Der) GTPase family. As to quaternary structure, associates with the 50S ribosomal subunit.

Functionally, GTPase that plays an essential role in the late steps of ribosome biogenesis. This is GTPase Der from Karelsulcia muelleri (strain GWSS) (Sulcia muelleri).